We begin with the raw amino-acid sequence, 89 residues long: Small ribosomal subunit protein uS15 (89 aa).

The protein belongs to the universal ribosomal protein uS15 family. In terms of assembly, part of the 30S ribosomal subunit. Forms a bridge to the 50S subunit in the 70S ribosome, contacting the 23S rRNA.

Functionally, one of the primary rRNA binding proteins, it binds directly to 16S rRNA where it helps nucleate assembly of the platform of the 30S subunit by binding and bridging several RNA helices of the 16S rRNA. Forms an intersubunit bridge (bridge B4) with the 23S rRNA of the 50S subunit in the ribosome. The sequence is that of Small ribosomal subunit protein uS15 from Anaeromyxobacter sp. (strain Fw109-5).